A 779-amino-acid polypeptide reads, in one-letter code: Tricorn protease-interacting factor F3 (779 aa).

Substrate is bound by residues Glu-102 and Gly-231–Asn-235. His-266 lines the Zn(2+) pocket. The Proton acceptor role is filled by Glu-267. Zn(2+) is bound by residues His-270 and Glu-289.

This sequence belongs to the peptidase M1 family. Part of the tricorn proteolytic complex. The cofactor is Zn(2+).

It localises to the cytoplasm. Functionally, proteases F1, F2 and F3 degrade oligopeptides produced by Tricorn (themselves probably produced by the proteasome), yielding free amino acids. The chain is Tricorn protease-interacting factor F3 (trf3) from Thermoplasma volcanium (strain ATCC 51530 / DSM 4299 / JCM 9571 / NBRC 15438 / GSS1).